The sequence spans 46 residues: Probable butyrate kinase (46 aa).

This sequence belongs to the acetokinase family.

It is found in the cytoplasm. The enzyme catalyses butanoate + ATP = butanoyl phosphate + ADP. The chain is Probable butyrate kinase (buk) from Geobacillus stearothermophilus (Bacillus stearothermophilus).